The following is a 324-amino-acid chain: Cytochrome c biogenesis protein CcsA (324 aa).

8 consecutive transmembrane segments (helical) span residues 17–37, 44–64, 68–88, 99–119, 145–165, 230–250, 264–278, and 291–311; these read IISVVIIIQLMTFFVHEIPAL, GMIATFLSITGLLIIRWIYSG, LSNLYESLMFLSWSFAIIHMI, YLSAITIPSAIFTQAFATSGL, MLLSYAALLVGSLFSIALLVI, VISIGFSFLTIGILSGAVWAN, TWAFITWTIYAIYSH, and AIVASIGFFIIWICYFGVNLL.

Belongs to the CcmF/CycK/Ccl1/NrfE/CcsA family. May interact with Ccs1.

It is found in the plastid. It localises to the chloroplast thylakoid membrane. Its function is as follows. Required during biogenesis of c-type cytochromes (cytochrome c6 and cytochrome f) at the step of heme attachment. The sequence is that of Cytochrome c biogenesis protein CcsA from Lemna minor (Common duckweed).